Here is an 81-residue protein sequence, read N- to C-terminus: Sulfur carrier protein TusA (81 aa).

The Cysteine persulfide intermediate role is filled by Cys19.

This sequence belongs to the sulfur carrier protein TusA family.

Its subcellular location is the cytoplasm. In terms of biological role, sulfur carrier protein which probably makes part of a sulfur-relay system. The polypeptide is Sulfur carrier protein TusA (Aeromonas salmonicida (strain A449)).